We begin with the raw amino-acid sequence, 172 residues long: NADH dehydrogenase [ubiquinone] 1 alpha subcomplex subunit 8 (172 aa).

CHCH domains are found at residues 33-74 and 75-118; these read GAQC…FRQI and KRHC…LGWV. 4 consecutive short sequence motifs (cx9C motif) follow at residues 36 to 46, 56 to 66, 78 to 88, and 100 to 110; these read CDKPNKEFMLC, CLEEGKLVNQC, CAEPFTEYWTC, and CRKQQAQFDEC. 4 disulfides stabilise this stretch: Cys-36/Cys-66, Cys-46/Cys-56, Cys-78/Cys-110, and Cys-88/Cys-100. Residues 133-159 form a disordered region; that stretch reads TDRPLPENPYHSRARPEPNPEVEGDLK. Basic and acidic residues predominate over residues 146 to 159; it reads ARPEPNPEVEGDLK.

This sequence belongs to the complex I NDUFA8 subunit family. As to quaternary structure, complex I is composed of 45 different subunits.

It is found in the mitochondrion inner membrane. It localises to the mitochondrion intermembrane space. The protein localises to the mitochondrion. Accessory subunit of the mitochondrial membrane respiratory chain NADH dehydrogenase (Complex I), that is believed not to be involved in catalysis. Complex I functions in the transfer of electrons from NADH to the respiratory chain. The immediate electron acceptor for the enzyme is believed to be ubiquinone. The sequence is that of NADH dehydrogenase [ubiquinone] 1 alpha subcomplex subunit 8 (NDUFA8) from Bos taurus (Bovine).